Consider the following 601-residue polypeptide: Probable translation initiation factor IF-2 (601 aa).

The 216-residue stretch at 14–229 (LRTPIVAVLG…VMMGLSQRYM (216 aa)) folds into the tr-type G domain. The tract at residues 23-30 (GHVDHGKT) is G1. 23–30 (GHVDHGKT) provides a ligand contact to GTP. Positions 48–52 (AITQH) are G2. Residues 85-88 (DTPG) form a G3 region. Residues 85–89 (DTPGH) and 139–142 (NKID) each bind GTP. Residues 139–142 (NKID) are G4. The tract at residues 207–209 (SAE) is G5.

This sequence belongs to the TRAFAC class translation factor GTPase superfamily. Classic translation factor GTPase family. IF-2 subfamily.

Functionally, function in general translation initiation by promoting the binding of the formylmethionine-tRNA to ribosomes. Seems to function along with eIF-2. The sequence is that of Probable translation initiation factor IF-2 from Haloarcula marismortui (strain ATCC 43049 / DSM 3752 / JCM 8966 / VKM B-1809) (Halobacterium marismortui).